The chain runs to 283 residues: Bifunctional protein FolD (283 aa).

NADP(+) is bound by residues Gly165–Ser167 and Ser190.

It belongs to the tetrahydrofolate dehydrogenase/cyclohydrolase family. As to quaternary structure, homodimer.

The catalysed reaction is (6R)-5,10-methylene-5,6,7,8-tetrahydrofolate + NADP(+) = (6R)-5,10-methenyltetrahydrofolate + NADPH. It carries out the reaction (6R)-5,10-methenyltetrahydrofolate + H2O = (6R)-10-formyltetrahydrofolate + H(+). It participates in one-carbon metabolism; tetrahydrofolate interconversion. Its function is as follows. Catalyzes the oxidation of 5,10-methylenetetrahydrofolate to 5,10-methenyltetrahydrofolate and then the hydrolysis of 5,10-methenyltetrahydrofolate to 10-formyltetrahydrofolate. This is Bifunctional protein FolD from Cupriavidus taiwanensis (strain DSM 17343 / BCRC 17206 / CCUG 44338 / CIP 107171 / LMG 19424 / R1) (Ralstonia taiwanensis (strain LMG 19424)).